Reading from the N-terminus, the 444-residue chain is Tubulin beta-4A chain (444 aa).

The MREI motif signature appears at 1 to 4 (MREI). Positions 11, 69, 138, 142, 143, and 144 each coordinate GTP. Residue Glu69 coordinates Mg(2+). Ser172 carries the phosphoserine; by CDK1 modification. GTP contacts are provided by Asn204 and Asn226. A 5-glutamyl polyglutamate modification is found at Glu436.

Belongs to the tubulin family. As to quaternary structure, dimer of alpha and beta chains. A typical microtubule is a hollow water-filled tube with an outer diameter of 25 nm and an inner diameter of 15 nM. Alpha-beta heterodimers associate head-to-tail to form protofilaments running lengthwise along the microtubule wall with the beta-tubulin subunit facing the microtubule plus end conferring a structural polarity. Microtubules usually have 13 protofilaments but different protofilament numbers can be found in some organisms and specialized cells. Mg(2+) is required as a cofactor. In terms of processing, some glutamate residues at the C-terminus are polyglycylated, resulting in polyglycine chains on the gamma-carboxyl group. Glycylation is mainly limited to tubulin incorporated into axonemes (cilia and flagella) whereas glutamylation is prevalent in neuronal cells, centrioles, axonemes, and the mitotic spindle. Both modifications can coexist on the same protein on adjacent residues, and lowering polyglycylation levels increases polyglutamylation, and reciprocally. Cilia and flagella glycylation is required for their stability and maintenance. Flagella glycylation controls sperm motility. Some glutamate residues at the C-terminus are polyglutamylated, resulting in polyglutamate chains on the gamma-carboxyl group. Polyglutamylation plays a key role in microtubule severing by spastin (SPAST). SPAST preferentially recognizes and acts on microtubules decorated with short polyglutamate tails: severing activity by SPAST increases as the number of glutamates per tubulin rises from one to eight, but decreases beyond this glutamylation threshold. Glutamylation is also involved in cilia motility. Post-translationally, phosphorylated on Ser-172 by CDK1 during the cell cycle, from metaphase to telophase, but not in interphase. This phosphorylation inhibits tubulin incorporation into microtubules.

Its subcellular location is the cytoplasm. It localises to the cytoskeleton. Functionally, tubulin is the major constituent of microtubules, a cylinder consisting of laterally associated linear protofilaments composed of alpha- and beta-tubulin heterodimers. Microtubules grow by the addition of GTP-tubulin dimers to the microtubule end, where a stabilizing cap forms. Below the cap, tubulin dimers are in GDP-bound state, owing to GTPase activity of alpha-tubulin. The protein is Tubulin beta-4A chain (TUBB4A) of Bos taurus (Bovine).